A 1173-amino-acid chain; its full sequence is MSRGSIEIPLRDTDEVIELDFDQLPEGDEVISILKQEHTQLHIWIALALEYYKQGKTEEFVKLLEAARIDGNLDYRDHEKDQMTCLDTLAAYYVQQARKEKNKDNKKDLITQATLLYTMADKIIMYDQNHLLGRACFCLLEGDKMDQADAQFHFVLNQSPNNIPALLGKACISFNKKDYRGALAYYKKALRTNPGCPAEVRLGMGHCFVKLNKLEKARLAFSRALELNSKCVGALVGLAVLELNNKEADSIKNGVQLLSRAYTIDPSNPMVLNHLANHFFFKKDYSKVQHLALHAFHNTEVEAMQAESCYQLARSFHVQEDYDQAFQYYYQATQFASSSFVLPFFGLGQMYIYRGDKENASQCFEKVLKAYPNNYETMKILGSLYAASEDQEKRDIAKGHLKKVTEQYPDDVEAWIELAQILEQTDIQGALSAYGTATRILQEKVQADVPPEILNNVGALHFRLGNLGEAKKYFLASLDRAKAEAEHDEHYYNAISVTTSYNLARLYEAMCEFHEAEKLYKNILREHPNYVDCYLRLGAMARDKGNFYEASDWFKEALQINQDHPDAWSLIGNLHLAKQEWGPGQKKFERILKQPSTQSDTYSMLALGNVWLQTLHQPTRDREKEKRHQDRALAIYKQVLRNDAKNLYAANGIGAVLAHKGYFREARDVFAQVREATADISDVWLNLAHIYVEQKQYISAVQMYENCLRKFYKHQNTEVVLYLARALFKCGKLQECKQTLLKARHVAPSDTVLMFNVALVLQRLATSVLKDEKSNLKEVLNAVKELELAHRYFSYLSKVGDKMRFDLALAATEARQCSDLLSQAQYHVARARKQDEEERELRAKQEQEKELLRQKLLKEQEEKRLREKEEQKKLLEQRAQYVEKTKNILMFTGETEATKEKKRGGGGGRRSKKGGEFDEFVNDDTDDDLPISKKKKRRKGSGSEQEGEDEEGGERKKKKRRRHPKGEEGSDDDETENGPKPKKRRPPKAEKKKAPKPERLPPSMKGKIKSKAIISSSDDSSDEDKLKIADEGHPRNSNSNSDSDEDEQRKKCASSESDSDENQNKSGSEAGSPRRPRRQRSDQDSDSDQPSRKRRPSGSEQSDNESVQSGRSHSGVSENDSRPASPSAESDHESERGSDNEGSGQGSGNESEPEGSNNEASDRGSEHGSDDSD.

TPR repeat units follow at residues 41 to 75 (LHIWIALALEYYKQGKTEEFVKLLEAARIDGNLDY), 129 to 162 (NHLLGRACFCLLEGDKMDQADAQFHFVLNQSPNN), 163 to 196 (IPALLGKACISFNKKDYRGALAYYKKALRTNPGC), 198 to 231 (AEVRLGMGHCFVKLNKLEKARLAFSRALELNSKC), 235 to 268 (LVGLAVLELNNKEADSIKNGVQLLSRAYTIDPSN), 306 to 339 (AESCYQLARSFHVQEDYDQAFQYYYQATQFASSS), 341 to 374 (VLPFFGLGQMYIYRGDKENASQCFEKVLKAYPNN), 412 to 444 (VEAWIELAQILEQTDIQGALSAYGTATRILQEK), 451 to 484 (PEILNNVGALHFRLGNLGEAKKYFLASLDRAKAE), 497 to 530 (VTTSYNLARLYEAMCEFHEAEKLYKNILREHPNY), 531 to 564 (VDCYLRLGAMARDKGNFYEASDWFKEALQINQDH), 566 to 598 (DAWSLIGNLHLAKQEWGPGQKKFERILKQPSTQ), 613 to 646 (QTLHQPTRDREKEKRHQDRALAIYKQVLRNDAKN), 647 to 680 (LYAANGIGAVLAHKGYFREARDVFAQVREATADI), 681 to 714 (SDVWLNLAHIYVEQKQYISAVQMYENCLRKFYKH), and 717 to 750 (TEVVLYLARALFKCGKLQECKQTLLKARHVAPSD). Positions 892–1173 (TGETEATKEK…GSEHGSDDSD (282 aa)) are disordered. Over residues 900-912 (EKKRGGGGGRRSK) the composition is skewed to basic residues. Positions 917–929 (FDEFVNDDTDDDL) are enriched in acidic residues. T925 bears the Phosphothreonine mark. S932, S941, and S943 each carry phosphoserine. Basic residues predominate over residues 955–964 (RKKKKRRRHP). Position 970 is a phosphoserine (S970). Basic residues predominate over residues 980 to 994 (KPKKRRPPKAEKKKA). Phosphoserine occurs at positions 1020 and 1021. Positions 1023-1034 (EDKLKIADEGHP) are enriched in basic and acidic residues. S1039, S1041, S1043, S1081, S1085, S1087, S1097, and S1102 each carry phosphoserine. Polar residues predominate over residues 1098–1128 (GSEQSDNESVQSGRSHSGVSENDSRPASPSA). Residues 1129 to 1139 (ESDHESERGSD) show a composition bias toward basic and acidic residues. The span at 1148–1159 (GNESEPEGSNNE) shows a compositional bias: low complexity. Residues 1160–1173 (ASDRGSEHGSDDSD) show a composition bias toward basic and acidic residues.

In terms of assembly, component of the PAF1 complex, which consists of CDC73, PAF1, LEO1, CTR9, RTF1 and SKIC8. The PAF1 complex interacts with PHF5A. Interacts with KMT2A/MLL1. Interacts with STAT3. Interacts with SETD5. Interacts with ERCC6. (Microbial infection) The PAF1 complex interacts with Zika virus French Polynesia 10087PF/2013 non-structural protein 5/NS5. The interaction with viral NS5 proteins may reduce the antiviral immune response by inhibiting the recruitment of the PAF1 complex to interferon-stimulated genes, thus preventing their transcription. As to quaternary structure, (Microbial infection) The PAF1 complex interacts with Dengue virus DENV2 16681 non-structural protein 5/NS5. The PAF1 complex interacts with Dengue virus DENV4 Dominica/814669/1981 non-structural protein 5/NS5. The interaction with viral NS5 proteins may reduce the antiviral immune response by inhibiting the recruitment of the PAF1 complex to interferon-stimulated genes, thus preventing their transcription. In terms of tissue distribution, widely expressed.

Its subcellular location is the nucleus speckle. Its function is as follows. Component of the PAF1 complex (PAF1C) which has multiple functions during transcription by RNA polymerase II and is implicated in regulation of development and maintenance of embryonic stem cell pluripotency. PAF1C associates with RNA polymerase II through interaction with POLR2A CTD non-phosphorylated and 'Ser-2'- and 'Ser-5'-phosphorylated forms and is involved in transcriptional elongation, acting both independently and synergistically with TCEA1 and in cooperation with the DSIF complex and HTATSF1. PAF1C is required for transcription of Hox and Wnt target genes. PAF1C is involved in hematopoiesis and stimulates transcriptional activity of KMT2A/MLL1; it promotes leukemogenesis through association with KMT2A/MLL1-rearranged oncoproteins, such as KMT2A/MLL1-MLLT3/AF9 and KMT2A/MLL1-MLLT1/ENL. PAF1C is involved in histone modifications such as ubiquitination of histone H2B and methylation on histone H3 'Lys-4' (H3K4me3). PAF1C recruits the RNF20/40 E3 ubiquitin-protein ligase complex and the E2 enzyme UBE2A or UBE2B to chromatin which mediate monoubiquitination of 'Lys-120' of histone H2B (H2BK120ub1); UB2A/B-mediated H2B ubiquitination is proposed to be coupled to transcription. PAF1C is involved in mRNA 3' end formation probably through association with cleavage and poly(A) factors. In case of infection by influenza A strain H3N2, PAF1C associates with viral NS1 protein, thereby regulating gene transcription. Required for mono- and trimethylation on histone H3 'Lys-4' (H3K4me3) and dimethylation on histone H3 'Lys-79' (H3K4me3). Required for Hox gene transcription. Required for the trimethylation of histone H3 'Lys-4' (H3K4me3) on genes involved in stem cell pluripotency; this function is synergistic with CXXC1 indicative for an involvement of the SET1 complex. Involved in transcriptional regulation of IL6-responsive genes and in JAK-STAT pathway; may regulate DNA-association of STAT3. This is RNA polymerase-associated protein CTR9 homolog (CTR9) from Homo sapiens (Human).